The sequence spans 344 residues: Methionine import ATP-binding protein MetN 1 (344 aa).

One can recognise an ABC transporter domain in the interval 2–241; the sequence is IELRNLSQRF…PHHEVTRALI (240 aa). ATP is bound at residue 38 to 45; it reads GRSGAGKS.

The protein belongs to the ABC transporter superfamily. Methionine importer (TC 3.A.1.24) family. In terms of assembly, the complex is composed of two ATP-binding proteins (MetN), two transmembrane proteins (MetI) and a solute-binding protein (MetQ).

The protein resides in the cell inner membrane. It catalyses the reaction L-methionine(out) + ATP + H2O = L-methionine(in) + ADP + phosphate + H(+). It carries out the reaction D-methionine(out) + ATP + H2O = D-methionine(in) + ADP + phosphate + H(+). Functionally, part of the ABC transporter complex MetNIQ involved in methionine import. Responsible for energy coupling to the transport system. This is Methionine import ATP-binding protein MetN 1 from Burkholderia orbicola (strain AU 1054).